We begin with the raw amino-acid sequence, 333 residues long: Glycerol-3-phosphate dehydrogenase [NAD(P)+] (333 aa).

Residues Trp-16, Arg-36, and Lys-109 each coordinate NADPH. 3 residues coordinate sn-glycerol 3-phosphate: Lys-109, Gly-137, and Ser-139. Ala-141 serves as a coordination point for NADPH. Sn-glycerol 3-phosphate-binding residues include Lys-192, Asp-245, Ser-255, Arg-256, and Asn-257. The Proton acceptor role is filled by Lys-192. Arg-256 is a binding site for NADPH. Residues Val-280 and Glu-282 each contribute to the NADPH site.

The protein belongs to the NAD-dependent glycerol-3-phosphate dehydrogenase family.

Its subcellular location is the cytoplasm. The enzyme catalyses sn-glycerol 3-phosphate + NAD(+) = dihydroxyacetone phosphate + NADH + H(+). The catalysed reaction is sn-glycerol 3-phosphate + NADP(+) = dihydroxyacetone phosphate + NADPH + H(+). The protein operates within membrane lipid metabolism; glycerophospholipid metabolism. In terms of biological role, catalyzes the reduction of the glycolytic intermediate dihydroxyacetone phosphate (DHAP) to sn-glycerol 3-phosphate (G3P), the key precursor for phospholipid synthesis. The polypeptide is Glycerol-3-phosphate dehydrogenase [NAD(P)+] (Parvibaculum lavamentivorans (strain DS-1 / DSM 13023 / NCIMB 13966)).